We begin with the raw amino-acid sequence, 209 residues long: Regulator of G-protein signaling 1 (209 aa).

One can recognise an RGS domain in the interval 85–200 (SLEKLLANQT…LKSDIYLNLL (116 aa)).

In terms of assembly, interacts with GNAI1 and GNAQ. Detected in peripheral blood monocytes. Expression is relatively low in B-cells and chronic lymphocytic leukemia B-cells; however, in other types of malignant B-cell such as non-Hodgkin lymphoma and hairy cell leukemia, expression is constitutively high.

Its subcellular location is the cell membrane. The protein localises to the cytoplasm. The protein resides in the cytosol. Functionally, regulates G protein-coupled receptor signaling cascades, including signaling downstream of the N-formylpeptide chemoattractant receptors and leukotriene receptors. Inhibits B cell chemotaxis toward CXCL12. Inhibits signal transduction by increasing the GTPase activity of G protein alpha subunits thereby driving them into their inactive GDP-bound form. This is Regulator of G-protein signaling 1 (RGS1) from Homo sapiens (Human).